The primary structure comprises 380 residues: Maintenance of mitochondrial morphology protein 1 (380 aa).

At M1–G64 the chain is on the lumenal side. The helical transmembrane segment at F65–M85 threads the bilayer. At T86–A380 the chain is on the cytoplasmic side. The SMP-LTD domain maps to A147–P369.

It belongs to the MMM1 family. As to quaternary structure, homodimer. Component of the ER-mitochondria encounter structure (ERMES) or MDM complex, composed of MMM1, MDM10, MDM12 and MDM34. An MMM1 homodimer associates with one molecule of MDM12 on each side in a pairwise head-to-tail manner, and the SMP-LTD domains of MMM1 and MDM12 generate a continuous hydrophobic tunnel for phospholipid trafficking.

It localises to the endoplasmic reticulum membrane. In terms of biological role, component of the ERMES/MDM complex, which serves as a molecular tether to connect the endoplasmic reticulum (ER) and mitochondria. Components of this complex are involved in the control of mitochondrial shape and protein biogenesis, and function in nonvesicular lipid trafficking between the ER and mitochondria. The MDM12-MMM1 subcomplex functions in the major beta-barrel assembly pathway that is responsible for biogenesis of all outer membrane beta-barrel proteins, and acts in a late step after the SAM complex. The MDM10-MDM12-MMM1 subcomplex further acts in the TOM40-specific pathway after the action of the MDM12-MMM1 complex. Essential for establishing and maintaining the structure of mitochondria and maintenance of mtDNA nucleoids. This Malassezia globosa (strain ATCC MYA-4612 / CBS 7966) (Dandruff-associated fungus) protein is Maintenance of mitochondrial morphology protein 1.